We begin with the raw amino-acid sequence, 211 residues long: Envelope protein UL45 homolog (211 aa).

Over 1–46 (MMSPTPEDDRDLVVVRGRLRMMDNGAEHDRERRSYTAWPHLCCGCT) the chain is Intravirion. The helical; Signal-anchor for type II membrane protein transmembrane segment at 47 to 67 (IGIILTMFVIATTLLLASLFA) threads the bilayer. The Virion surface portion of the chain corresponds to 68–211 (FSYMSLESGT…SSILSNAIMK (144 aa)). 2 N-linked (GlcNAc...) asparagine; by host glycosylation sites follow: Asn96 and Asn133.

Belongs to the herpesviridae HHV-1 UL45 family.

It localises to the virion membrane. This is Envelope protein UL45 homolog (UL45H) from Gallid herpesvirus 2 (strain bc-1) (GaHV-2).